The following is a 1375-amino-acid chain: DNA-directed RNA polymerase subunit beta (1375 aa).

Belongs to the RNA polymerase beta chain family. As to quaternary structure, the RNAP catalytic core consists of 2 alpha, 1 beta, 1 beta' and 1 omega subunit. When a sigma factor is associated with the core the holoenzyme is formed, which can initiate transcription.

The catalysed reaction is RNA(n) + a ribonucleoside 5'-triphosphate = RNA(n+1) + diphosphate. DNA-dependent RNA polymerase catalyzes the transcription of DNA into RNA using the four ribonucleoside triphosphates as substrates. This Methylibium petroleiphilum (strain ATCC BAA-1232 / LMG 22953 / PM1) protein is DNA-directed RNA polymerase subunit beta.